We begin with the raw amino-acid sequence, 891 residues long: Microtubule-associated protein 10 (891 aa).

Disordered regions lie at residues 325 to 355 (AAVQ…PPQI), 401 to 457 (EDKG…VTKG), 504 to 679 (SWKG…KSSC), and 702 to 844 (TTEN…SNLS). Over residues 407-417 (PSTKSTSPSES) the composition is skewed to low complexity. Composition is skewed to polar residues over residues 509-520 (VSSSAAESQMSP) and 527-544 (PTDS…SQLP). Basic and acidic residues-rich tracts occupy residues 577-592 (STTK…KQEM) and 645-658 (TVDK…DGRQ). Polar residues-rich tracts occupy residues 665–679 (ADTS…KSSC), 702–718 (TTEN…SSTG), 726–749 (SRAS…SSVL), 776–790 (EASS…SQWT), and 826–844 (KSQS…SNLS).

As to quaternary structure, interacts (via middle region) with microtubules.

Its subcellular location is the cytoplasm. It is found in the cytoskeleton. It localises to the spindle pole. The protein resides in the microtubule organizing center. The protein localises to the centrosome. Its subcellular location is the midbody. Functionally, microtubule-associated protein (MAP) that plays a role in the regulation of cell division; promotes microtubule stability and participates in the organization of the spindle midzone and normal progress of cytokinesis. The chain is Microtubule-associated protein 10 (Map10) from Mus musculus (Mouse).